The primary structure comprises 149 residues: Histone H2A (149 aa).

The span at 1 to 23 (METAGKAKKGFGGRKGGPRKKSV) shows a compositional bias: basic residues. 2 disordered regions span residues 1 to 25 (METAGKAKKGFGGRKGGPRKKSVTR) and 127 to 149 (KTAEKAAKEPKSPSKAGKSPKKA). Basic and acidic residues predominate over residues 127-138 (KTAEKAAKEPKS). 2 short sequence motifs (SPKK motif) span residues 138–141 (SPSK) and 145–148 (SPKK).

It belongs to the histone H2A family. In terms of assembly, the nucleosome is a histone octamer containing two molecules each of H2A, H2B, H3 and H4 assembled in one H3-H4 heterotetramer and two H2A-H2B heterodimers. The octamer wraps approximately 147 bp of DNA.

It is found in the nucleus. The protein localises to the chromosome. In terms of biological role, core component of nucleosome. Nucleosomes wrap and compact DNA into chromatin, limiting DNA accessibility to the cellular machineries which require DNA as a template. Histones thereby play a central role in transcription regulation, DNA repair, DNA replication and chromosomal stability. DNA accessibility is regulated via a complex set of post-translational modifications of histones, also called histone code, and nucleosome remodeling. The chain is Histone H2A from Petroselinum crispum (Parsley).